The chain runs to 458 residues: Flavohemoprotein (458 aa).

A Globin domain is found at 2–158; that stretch reads PLSEDTIKAV…LAHLFVRREE (157 aa). Position 107 (histidine 107) interacts with heme b. Catalysis depends on charge relay system residues tyrosine 117 and glutamate 157. The reductase stretch occupies residues 169–457; the sequence is GGWRQTRSFR…FEMFGPFKPL (289 aa). Positions 172–279 constitute an FAD-binding FR-type domain; sequence RQTRSFRVEE…APPYGDFFLE (108 aa). FAD contacts are provided by residues tyrosine 211 and 228–231; that span reads RQYS. 320–325 serves as a coordination point for NADP(+); sequence GIGQTP. 450-453 lines the FAD pocket; that stretch reads MFGP.

The protein belongs to the globin family. Two-domain flavohemoproteins subfamily. This sequence in the C-terminal section; belongs to the flavoprotein pyridine nucleotide cytochrome reductase family. In terms of assembly, monomer. It depends on heme b as a cofactor. FAD is required as a cofactor.

It catalyses the reaction 2 nitric oxide + NADPH + 2 O2 = 2 nitrate + NADP(+) + H(+). It carries out the reaction 2 nitric oxide + NADH + 2 O2 = 2 nitrate + NAD(+) + H(+). In terms of biological role, flavohemoprotein involved in nitric oxide (NO) detoxification in an aerobic process, termed nitric oxide dioxygenase (NOD) reaction that utilizes O(2) and NAD(P)H to convert NO to nitrate, which protects the protozoan parasite from various noxious nitrogen compounds. Therefore, plays a central role in the inducible response to nitrosative stress. May also be involved in O(2) detoxification. The protein is Flavohemoprotein (hmpA) of Giardia intestinalis (strain ATCC 50581 / GS clone H7) (Giardia lamblia).